Here is a 300-residue protein sequence, read N- to C-terminus: Ribosomal protein L11 methyltransferase (300 aa).

S-adenosyl-L-methionine-binding residues include threonine 152, glycine 173, aspartate 195, and asparagine 234.

Belongs to the methyltransferase superfamily. PrmA family.

Its subcellular location is the cytoplasm. It catalyses the reaction L-lysyl-[protein] + 3 S-adenosyl-L-methionine = N(6),N(6),N(6)-trimethyl-L-lysyl-[protein] + 3 S-adenosyl-L-homocysteine + 3 H(+). Its function is as follows. Methylates ribosomal protein L11. This Burkholderia vietnamiensis (strain G4 / LMG 22486) (Burkholderia cepacia (strain R1808)) protein is Ribosomal protein L11 methyltransferase.